The following is a 642-amino-acid chain: Probable serine/threonine-protein kinase drkA (642 aa).

Positions 1–23 (MKKLPFLIIIIYIFLILISISSS) are cleaved as a signal peptide. Topologically, residues 24-322 (IDYNYNNDID…KPTISLLKKY (299 aa)) are extracellular. The span at 106 to 128 (SENSGSGSNSNSNSKNTDSSTGP) shows a compositional bias: low complexity. The tract at residues 106-136 (SENSGSGSNSNSNSKNTDSSTGPTPSPISIN) is disordered. Residues asparagine 136, asparagine 140, asparagine 158, asparagine 244, and asparagine 271 are each glycosylated (N-linked (GlcNAc...) asparagine). Residues 323–343 (LIIGFSIVGGLLIIGGCFLLI) form a helical membrane-spanning segment. The Cytoplasmic segment spans residues 344-642 (RNRYRSSGYY…SDLQYVRQQL (299 aa)). A Protein kinase domain is found at 374 to 627 (IKIGVRIGKG…EQCLERLESI (254 aa)). ATP-binding positions include 380 to 388 (IGKGNYGEV) and lysine 401. The active-site Proton acceptor is aspartate 497.

It belongs to the protein kinase superfamily. TKL Ser/Thr protein kinase family.

The protein localises to the membrane. The enzyme catalyses L-seryl-[protein] + ATP = O-phospho-L-seryl-[protein] + ADP + H(+). It catalyses the reaction L-threonyl-[protein] + ATP = O-phospho-L-threonyl-[protein] + ADP + H(+). The chain is Probable serine/threonine-protein kinase drkA (drkA) from Dictyostelium discoideum (Social amoeba).